A 225-amino-acid polypeptide reads, in one-letter code: Phosphatidylserine decarboxylase proenzyme (225 aa).

The Schiff-base intermediate with substrate; via pyruvic acid role is filled by Ser195. Position 195 is a pyruvic acid (Ser); by autocatalysis (Ser195).

The protein belongs to the phosphatidylserine decarboxylase family. PSD-A subfamily. As to quaternary structure, heterodimer of a large membrane-associated beta subunit and a small pyruvoyl-containing alpha subunit. It depends on pyruvate as a cofactor. In terms of processing, is synthesized initially as an inactive proenzyme. Formation of the active enzyme involves a self-maturation process in which the active site pyruvoyl group is generated from an internal serine residue via an autocatalytic post-translational modification. Two non-identical subunits are generated from the proenzyme in this reaction, and the pyruvate is formed at the N-terminus of the alpha chain, which is derived from the carboxyl end of the proenzyme. The post-translation cleavage follows an unusual pathway, termed non-hydrolytic serinolysis, in which the side chain hydroxyl group of the serine supplies its oxygen atom to form the C-terminus of the beta chain, while the remainder of the serine residue undergoes an oxidative deamination to produce ammonia and the pyruvoyl prosthetic group on the alpha chain.

The protein resides in the cell membrane. The catalysed reaction is a 1,2-diacyl-sn-glycero-3-phospho-L-serine + H(+) = a 1,2-diacyl-sn-glycero-3-phosphoethanolamine + CO2. It functions in the pathway phospholipid metabolism; phosphatidylethanolamine biosynthesis; phosphatidylethanolamine from CDP-diacylglycerol: step 2/2. Catalyzes the formation of phosphatidylethanolamine (PtdEtn) from phosphatidylserine (PtdSer). The chain is Phosphatidylserine decarboxylase proenzyme from Gluconobacter oxydans (strain 621H) (Gluconobacter suboxydans).